A 187-amino-acid chain; its full sequence is Adenylate kinase (187 aa).

Position 10 to 15 (10 to 15 (GSGKGT)) interacts with ATP. Positions 30–59 (STGDLLRAEVAAGSPLGLKAKEVMARGDLV) are NMP. AMP is bound by residues threonine 31, arginine 36, 57–59 (DLV), 85–88 (GYPR), and glutamine 92. The tract at residues 126-136 (GRAKAEGREDD) is LID. Arginine 127 is a binding site for ATP. Residues arginine 133 and arginine 144 each coordinate AMP. Glycine 172 is a binding site for ATP.

Belongs to the adenylate kinase family. Monomer.

The protein resides in the cytoplasm. The catalysed reaction is AMP + ATP = 2 ADP. Its pathway is purine metabolism; AMP biosynthesis via salvage pathway; AMP from ADP: step 1/1. Functionally, catalyzes the reversible transfer of the terminal phosphate group between ATP and AMP. Plays an important role in cellular energy homeostasis and in adenine nucleotide metabolism. The chain is Adenylate kinase from Xanthomonas campestris pv. campestris (strain 8004).